The following is a 196-amino-acid chain: ATP-dependent Clp protease proteolytic subunit (196 aa).

Ser96 acts as the Nucleophile in catalysis. His121 is a catalytic residue.

It belongs to the peptidase S14 family. As to quaternary structure, fourteen ClpP subunits assemble into 2 heptameric rings which stack back to back to give a disk-like structure with a central cavity, resembling the structure of eukaryotic proteasomes.

The protein resides in the cytoplasm. It carries out the reaction Hydrolysis of proteins to small peptides in the presence of ATP and magnesium. alpha-casein is the usual test substrate. In the absence of ATP, only oligopeptides shorter than five residues are hydrolyzed (such as succinyl-Leu-Tyr-|-NHMec, and Leu-Tyr-Leu-|-Tyr-Trp, in which cleavage of the -Tyr-|-Leu- and -Tyr-|-Trp bonds also occurs).. In terms of biological role, cleaves peptides in various proteins in a process that requires ATP hydrolysis. Has a chymotrypsin-like activity. Plays a major role in the degradation of misfolded proteins. The protein is ATP-dependent Clp protease proteolytic subunit of Streptococcus suis (strain 98HAH33).